Reading from the N-terminus, the 396-residue chain is Ribosomal RNA large subunit methyltransferase I (396 aa).

The 80-residue stretch at serine 2 to arginine 81 folds into the PUA domain.

It belongs to the methyltransferase superfamily. RlmI family.

It localises to the cytoplasm. The catalysed reaction is cytidine(1962) in 23S rRNA + S-adenosyl-L-methionine = 5-methylcytidine(1962) in 23S rRNA + S-adenosyl-L-homocysteine + H(+). In terms of biological role, specifically methylates the cytosine at position 1962 (m5C1962) of 23S rRNA. This Enterobacter sp. (strain 638) protein is Ribosomal RNA large subunit methyltransferase I.